The chain runs to 145 residues: Large ribosomal subunit protein uL24 (145 aa).

The interval 108 to 145 is disordered; that stretch reads EPIQEEQQKTEETKQEIAPEEVEAKEAQDKQEVKENDQ. Residues 113–145 are compositionally biased toward basic and acidic residues; it reads EQQKTEETKQEIAPEEVEAKEAQDKQEVKENDQ.

This sequence belongs to the universal ribosomal protein uL24 family. As to quaternary structure, part of the 50S ribosomal subunit.

Functionally, one of two assembly initiator proteins, it binds directly to the 5'-end of the 23S rRNA, where it nucleates assembly of the 50S subunit. Its function is as follows. Located at the polypeptide exit tunnel on the outside of the subunit. This chain is Large ribosomal subunit protein uL24 (rpl24), found in Thermoplasma volcanium (strain ATCC 51530 / DSM 4299 / JCM 9571 / NBRC 15438 / GSS1).